A 293-amino-acid polypeptide reads, in one-letter code: Deubiquitinase OTUD6B (293 aa).

Disordered regions lie at residues 1-43 (MEEV…RRKQ) and 57-114 (QKHE…LEKE). The region spanning 147–284 (LQIKEISSDG…GEHYNSVEPL (138 aa)) is the OTU domain. Positions 152 to 158 (ISSDGHC) are cys-loop. Residue Asp-155 is part of the active site. Cys-158 (nucleophile) is an active-site residue. The tract at residues 219 to 229 (VADTAAWGGQL) is variable-loop. The segment at 267–277 (YMRHAYGLGEH) is his-loop. His-277 is an active-site residue.

The enzyme catalyses Thiol-dependent hydrolysis of ester, thioester, amide, peptide and isopeptide bonds formed by the C-terminal Gly of ubiquitin (a 76-residue protein attached to proteins as an intracellular targeting signal).. In terms of biological role, deubiquitinating enzyme that may play a role in the ubiquitin-dependent regulation of different cellular processes. The sequence is that of Deubiquitinase OTUD6B (otud6b) from Danio rerio (Zebrafish).